Here is a 126-residue protein sequence, read N- to C-terminus: Aspartate 1-decarboxylase (126 aa).

Ser25 serves as the catalytic Schiff-base intermediate with substrate; via pyruvic acid. Position 25 is a pyruvic acid (Ser) (Ser25). Residue Thr57 coordinates substrate. Tyr58 (proton donor) is an active-site residue. Residue 73–75 (GAA) coordinates substrate.

This sequence belongs to the PanD family. In terms of assembly, heterooctamer of four alpha and four beta subunits. The cofactor is pyruvate. Is synthesized initially as an inactive proenzyme, which is activated by self-cleavage at a specific serine bond to produce a beta-subunit with a hydroxyl group at its C-terminus and an alpha-subunit with a pyruvoyl group at its N-terminus.

Its subcellular location is the cytoplasm. The enzyme catalyses L-aspartate + H(+) = beta-alanine + CO2. It functions in the pathway cofactor biosynthesis; (R)-pantothenate biosynthesis; beta-alanine from L-aspartate: step 1/1. Functionally, catalyzes the pyruvoyl-dependent decarboxylation of aspartate to produce beta-alanine. This chain is Aspartate 1-decarboxylase, found in Psychromonas ingrahamii (strain DSM 17664 / CCUG 51855 / 37).